The sequence spans 325 residues: ATP synthase gamma chain (325 aa).

The protein belongs to the ATPase gamma chain family. F-type ATPases have 2 components, CF(1) - the catalytic core - and CF(0) - the membrane proton channel. CF(1) has five subunits: alpha(3), beta(3), gamma(1), delta(1), epsilon(1). CF(0) has three main subunits: a, b and c.

The protein resides in the cell membrane. Its function is as follows. Produces ATP from ADP in the presence of a proton gradient across the membrane. The gamma chain is believed to be important in regulating ATPase activity and the flow of protons through the CF(0) complex. The chain is ATP synthase gamma chain from Corynebacterium diphtheriae (strain ATCC 700971 / NCTC 13129 / Biotype gravis).